A 473-amino-acid chain; its full sequence is Trehalose-6-phosphate synthase (473 aa).

Arginine 10 lines the D-glucose 6-phosphate pocket. 21–22 is a UDP-alpha-D-glucose binding site; that stretch reads GG. 2 residues coordinate D-glucose 6-phosphate: tyrosine 76 and aspartate 130. Arginine 262 and lysine 267 together coordinate UDP-alpha-D-glucose. Residue arginine 300 coordinates D-glucose 6-phosphate. UDP-alpha-D-glucose-binding positions include phenylalanine 339 and 365–369; that span reads LVAKE. Residues 454-473 form a disordered region; it reads TPRSPERQQQNNVATFPKLA.

It belongs to the glycosyltransferase 20 family. Homotetramer.

It catalyses the reaction D-glucose 6-phosphate + UDP-alpha-D-glucose = alpha,alpha-trehalose 6-phosphate + UDP + H(+). Its pathway is glycan biosynthesis; trehalose biosynthesis. Probably involved in the osmoprotection via the biosynthesis of trehalose. Catalyzes the transfer of glucose from UDP-alpha-D-glucose (UDP-Glc) to D-glucose 6-phosphate (Glc-6-P) to form trehalose-6-phosphate. Acts with retention of the anomeric configuration of the UDP-sugar donor. The protein is Trehalose-6-phosphate synthase of Salmonella paratyphi A (strain ATCC 9150 / SARB42).